Consider the following 87-residue polypeptide: Small ribosomal subunit protein eS21 (87 aa).

It belongs to the eukaryotic ribosomal protein eS21 family. As to quaternary structure, component of the small ribosomal subunit. Mature ribosomes consist of a small (40S) and a large (60S) subunit. The 40S subunit contains about 33 different proteins and 1 molecule of RNA (18S). The 60S subunit contains about 49 different proteins and 3 molecules of RNA (25S, 5.8S and 5S).

The protein resides in the cytoplasm. Its function is as follows. Required for the processing of the 20S rRNA-precursor to mature 18S rRNA in a late step of the maturation of 40S ribosomal subunits. Has a physiological role leading to 18S rRNA stability. The polypeptide is Small ribosomal subunit protein eS21 (RPS21) (Candida albicans (Yeast)).